The sequence spans 353 residues: Guanine nucleotide-binding protein subunit alpha (353 aa).

The segment at 1–26 (MGCGMSVEEKEGKARNEEIENQLKRD) is disordered. A lipid anchor (N-myristoyl glycine) is attached at G2. C3 carries S-palmitoyl cysteine lipidation. Residues 7–26 (VEEKEGKARNEEIENQLKRD) show a composition bias toward basic and acidic residues. Positions 32 to 353 (NEIKMLLLGA…QENLRLCGLI (322 aa)) constitute a G-alpha domain. Residues 35–48 (KMLLLGAGESGKST) form a G1 motif region. Residues E43, S44, G45, K46, S47, T48, D150, L175, T181, G203, N269, K270, D272, and A325 each contribute to the GTP site. S47 provides a ligand contact to Mg(2+). Residues 173-181 (DVLRSRVKT) form a G2 motif region. Residue T181 coordinates Mg(2+). Residues 196 to 205 (YRMFDVGGQR) form a G3 motif region. Residues 265–272 (ILFLNKID) form a G4 motif region. The tract at residues 323–328 (TCATDT) is G5 motif.

This sequence belongs to the G-alpha family. G(q) subfamily. In terms of assembly, g proteins are composed of 3 units; alpha, beta and gamma. The alpha chain contains the guanine nucleotide binding site. Mg(2+) is required as a cofactor.

Functionally, guanine nucleotide-binding proteins (G proteins) are involved as modulators or transducers in various transmembrane signaling systems. The protein is Guanine nucleotide-binding protein subunit alpha (SSG-1) of Sporothrix schenckii (strain ATCC 58251 / de Perez 2211183) (Rose-picker's disease fungus).